The primary structure comprises 526 residues: Amine oxidase [flavin-containing] A (526 aa).

Met1 is subject to N-acetylmethionine. The Cytoplasmic segment spans residues 1-497 (MTDLEKPSIT…HTFLERNLPS (497 aa)). Ser383 carries the post-translational modification Phosphoserine. Cys406 carries the S-8alpha-FAD cysteine modification. The helical; Anchor for type IV membrane protein transmembrane segment at 498 to 518 (VPGLLKITGFSTSVALLCFVL) threads the bilayer. Topologically, residues 519–526 (YKFKQPQS) are mitochondrial intermembrane. An interaction with membrane phospholipid headgroups region spans residues 520–522 (KFK).

It belongs to the flavin monoamine oxidase family. Monomer, homo- or heterodimer (containing two subunits of similar size). Each subunit contains a covalently bound flavin. Enzymatically active as monomer. FAD is required as a cofactor.

It is found in the mitochondrion outer membrane. The catalysed reaction is a secondary aliphatic amine + O2 + H2O = a primary amine + an aldehyde + H2O2. The enzyme catalyses a primary methyl amine + O2 + H2O = an aldehyde + H2O2 + NH4(+). It carries out the reaction serotonin + O2 + H2O = (5-hydroxyindol-3-yl)acetaldehyde + H2O2 + NH4(+). It catalyses the reaction (R)-adrenaline + O2 + H2O = (R)-3,4-dihydroxymandelaldehyde + methylamine + H2O2. The catalysed reaction is dopamine + O2 + H2O = 3,4-dihydroxyphenylacetaldehyde + H2O2 + NH4(+). The enzyme catalyses tyramine + O2 + H2O = (4-hydroxyphenyl)acetaldehyde + H2O2 + NH4(+). It carries out the reaction (R)-noradrenaline + O2 + H2O = (R)-3,4-dihydroxymandelaldehyde + H2O2 + NH4(+). It catalyses the reaction kynuramine + O2 + H2O = 3-(2-aminophenyl)-3-oxopropanal + H2O2 + NH4(+). The catalysed reaction is tryptamine + O2 + H2O = indole-3-acetaldehyde + H2O2 + NH4(+). The enzyme catalyses 2-phenylethylamine + O2 + H2O = 2-phenylacetaldehyde + H2O2 + NH4(+). Its function is as follows. Catalyzes the oxidative deamination of biogenic and xenobiotic amines and has important functions in the metabolism of neuroactive and vasoactive amines in the central nervous system and peripheral tissues. Preferentially oxidizes serotonin. Also catalyzes the oxidative deamination of kynuramine to 3-(2-aminophenyl)-3-oxopropanal that can spontaneously condense to 4-hydroxyquinoline. This is Amine oxidase [flavin-containing] A from Mus musculus (Mouse).